The following is a 288-amino-acid chain: MALFQKKKYIKINPNRSIIEKQAEQPEVPDELFAKCPACKHTIYQKDLGKNKVCPNCDYNFRITAKERLAIVADKDSFVEMFTGIESKNPLDFPGYPEKLAATKARTGLDEAVITGTATIKGQKTALAIMDSTFIMASMGTVVGEKLTRLFEYATTEKLPIIVFTASGGARMQEGIMSLMQMAKTSAAVKRHSNAGLFYITVLTDPTTGGVTASFASLGDIILAEPQSLIGFAGRRVIEQTVRQTLPDDFQKAEFLLNHGFVDAIVKRTELRQKLALLLELHTEVENV.

Positions 32-288 (LFAKCPACKH…LELHTEVENV (257 aa)) constitute a CoA carboxyltransferase N-terminal domain. Zn(2+) is bound by residues Cys-36, Cys-39, Cys-54, and Cys-57. The C4-type zinc finger occupies 36–57 (CPACKHTIYQKDLGKNKVCPNC).

It belongs to the AccD/PCCB family. Acetyl-CoA carboxylase is a heterohexamer composed of biotin carboxyl carrier protein (AccB), biotin carboxylase (AccC) and two subunits each of ACCase subunit alpha (AccA) and ACCase subunit beta (AccD). The cofactor is Zn(2+).

The protein localises to the cytoplasm. The catalysed reaction is N(6)-carboxybiotinyl-L-lysyl-[protein] + acetyl-CoA = N(6)-biotinyl-L-lysyl-[protein] + malonyl-CoA. It functions in the pathway lipid metabolism; malonyl-CoA biosynthesis; malonyl-CoA from acetyl-CoA: step 1/1. Functionally, component of the acetyl coenzyme A carboxylase (ACC) complex. Biotin carboxylase (BC) catalyzes the carboxylation of biotin on its carrier protein (BCCP) and then the CO(2) group is transferred by the transcarboxylase to acetyl-CoA to form malonyl-CoA. The sequence is that of Acetyl-coenzyme A carboxylase carboxyl transferase subunit beta from Lactococcus lactis subsp. lactis (strain IL1403) (Streptococcus lactis).